We begin with the raw amino-acid sequence, 224 residues long: Inhibitor of apoptosis protein (224 aa).

Residues 29–92 form a BIR repeat; the sequence is VDARNQSFAI…GFWSRNCGFM (64 aa). Residues cysteine 62, cysteine 65, histidine 82, and cysteine 89 each contribute to the Zn(2+) site. The segment at 189 to 207 adopts a C4-type zinc-finger fold; the sequence is CMTCGIEPIKKDENFCNAC.

The protein belongs to the asfivirus IAP family. In terms of assembly, interacts with subunit p17 of host CASP3.

The protein resides in the host cytoplasm. It is found in the virion. Its function is as follows. Prevent apoptosis of host cell by inhibiting caspase-3/CASP3 activation to promote the viral replication. Also induces the activation of host NF-kappaB. The polypeptide is Inhibitor of apoptosis protein (Ornithodoros (relapsing fever ticks)).